Consider the following 270-residue polypeptide: MAAVLFALLALALLRAGGASAAAGTVTTSVQSGDSWVQLTCTLNTSAAGVTGHRWLKGKEVVKEDQLQGLHTEHNVTGDDRFGKYSCLFLPKDTGEATLTVDGPPRIKAVKKSEHANEGDSVTLLCKSESFPFVTAWVWYKVADSGDQVIQNGSQSRFFISHSEAQSELHIKDLDLTSDPGEYACNGTSLQGTDAAVVTLRVRSRLAALWPFLGIVAEVLVLVTVIFIYEKRRKPDEVLDDEDAGAAPLKSSGHHVNDDKGKNVRQRNAS.

The signal sequence occupies residues 1–21 (MAAVLFALLALALLRAGGASA). Positions 22-103 (AAGTVTTSVQ…TGEATLTVDG (82 aa)) constitute an Ig-like C2-type domain. Residues 22 to 207 (AAGTVTTSVQ…VTLRVRSRLA (186 aa)) are Extracellular-facing. Disulfide bonds link Cys-41-Cys-87 and Cys-126-Cys-185. 4 N-linked (GlcNAc...) asparagine glycosylation sites follow: Asn-44, Asn-75, Asn-152, and Asn-186. Residues 105–203 (PRIKAVKKSE…DAAVVTLRVR (99 aa)) form the Ig-like V-type domain. A helical transmembrane segment spans residues 208–228 (ALWPFLGIVAEVLVLVTVIFI). Residues 229–270 (YEKRRKPDEVLDDEDAGAAPLKSSGHHVNDDKGKNVRQRNAS) lie on the Cytoplasmic side of the membrane. Positions 239–270 (LDDEDAGAAPLKSSGHHVNDDKGKNVRQRNAS) are disordered. Ser-252 is modified (phosphoserine).

Homooligomer. Interacts with VEGFA, KDR/VEGFR2, PPIA/CYPA, SLC1A3, SLC16A12, SLC16A11, ATP1B2, MAG, L1CAM and AJAP1. Interacts with PPIL2; regulates BSG transport to the cell membrane. Interacts with XKR8; promoting its localization at the cell membrane. Interacts with SLC16A3; interaction mediates SLC16A3 targeting to the plasma membrane. Interacts with SLC16A1; interaction mediates SLC16A1 targeting to the plasma membrane. Interacts with SLC16A6; this interaction mediates targeting to the plasma membrane.

Its subcellular location is the cell membrane. It localises to the endoplasmic reticulum membrane. The protein localises to the basolateral cell membrane. Its function is as follows. Signaling receptor for cyclophilins, essential for PPIA/CYPA and PPIB/CYPB-dependent signaling related to chemotaxis and adhesion of immune cells. Plays an important role in targeting the monocarboxylate transporters SLC16A1/GLUT1, SLC16A3, SLC16A8, SLC16A11 and SLC16A12 to the plasma membrane. Acts as a coreceptor for vascular endothelial growth factor receptor 2 (KDR/VEGFR2) in endothelial cells enhancing its VEGFA-mediated activation and downstream signaling. Promotes angiogenesis through EPAS1/HIF2A-mediated up-regulation of VEGFA and KDR/VEGFR2 in endothelial cells. This chain is Basigin (BSG), found in Oryctolagus cuniculus (Rabbit).